The chain runs to 212 residues: Nitric oxide synthase (212 aa).

Residue Y11 coordinates heme b. Positions 30–50 (KKRAIGFKKLAKAVKFSTKLM) are calmodulin-binding. The Flavodoxin-like domain maps to 60–212 (ATILYATETG…AVDTLLEELG (153 aa)). The disordered stretch occupies residues 155–175 (SYSDSRKSSSDEPEHKDNFES). Over residues 158 to 173 (DSRKSSSDEPEHKDNF) the composition is skewed to basic and acidic residues. Position 186 to 212 (186 to 212 (AFGLGSRAYPHFCAFARAVDTLLEELG)) interacts with FMN.

It belongs to the NOS family. Heme b is required as a cofactor. FAD serves as cofactor. The cofactor is FMN.

It catalyses the reaction 2 L-arginine + 3 NADPH + 4 O2 + H(+) = 2 L-citrulline + 2 nitric oxide + 3 NADP(+) + 4 H2O. Its function is as follows. Produces nitric oxide (NO) which is a messenger molecule with diverse functions throughout the body. The sequence is that of Nitric oxide synthase from Squalus acanthias (Spiny dogfish).